Here is a 230-residue protein sequence, read N- to C-terminus: Ribonuclease 3 (230 aa).

The RNase III domain maps to 5-125; sequence YSRFYNILGY…VIGAIYLDSD (121 aa). Glu-40 lines the Mg(2+) pocket. Residue Asp-44 is part of the active site. Mg(2+) contacts are provided by Asp-111 and Glu-114. Glu-114 is an active-site residue. A DRBM domain is found at 153-223; the sequence is DSKSKLQEIL…AEKMIEMLSQ (71 aa).

This sequence belongs to the ribonuclease III family. In terms of assembly, homodimer. Requires Mg(2+) as cofactor.

It is found in the cytoplasm. It carries out the reaction Endonucleolytic cleavage to 5'-phosphomonoester.. Functionally, digests double-stranded RNA. Involved in the processing of primary rRNA transcript to yield the immediate precursors to the large and small rRNAs (23S and 16S). Processes some mRNAs, and tRNAs when they are encoded in the rRNA operon. Processes pre-crRNA and tracrRNA of type II CRISPR loci if present in the organism. The chain is Ribonuclease 3 from Francisella tularensis subsp. holarctica (strain LVS).